The chain runs to 316 residues: Phosphate acyltransferase (316 aa).

This sequence belongs to the PlsX family. In terms of assembly, homodimer. Probably interacts with PlsY.

It is found in the cytoplasm. It catalyses the reaction a fatty acyl-[ACP] + phosphate = an acyl phosphate + holo-[ACP]. Its pathway is lipid metabolism; phospholipid metabolism. Functionally, catalyzes the reversible formation of acyl-phosphate (acyl-PO(4)) from acyl-[acyl-carrier-protein] (acyl-ACP). This enzyme utilizes acyl-ACP as fatty acyl donor, but not acyl-CoA. This Chlamydia abortus (strain DSM 27085 / S26/3) (Chlamydophila abortus) protein is Phosphate acyltransferase.